Here is an 88-residue protein sequence, read N- to C-terminus: Acyl-CoA-binding domain-containing protein 7 (88 aa).

An ACB domain is found at Leu-3–Ile-88. Residues Arg-15, Tyr-30–Lys-34, Lys-56, and Tyr-75 each bind an acyl-CoA.

Belongs to the ACBD7 family.

In terms of biological role, binds medium- and long-chain acyl-CoA esters. This chain is Acyl-CoA-binding domain-containing protein 7 (ACBD7), found in Bos taurus (Bovine).